The sequence spans 347 residues: NADH-ubiquinone oxidoreductase chain 2 (347 aa).

Helical transmembrane passes span 3 to 23 (PIIF…VMIS), 25 to 45 (HWLL…PIMM), 67 to 87 (SMLL…WTVM), 96 to 116 (MLMT…FWVP), 122 to 142 (IPLS…MSVL), 145 to 165 (IFPS…ILIG), 178 to 198 (IMAY…PYNP), 200 to 220 (MTLL…TMFM), 239 to 259 (IMTV…PLSG), 274 to 294 (NSII…YFYM), and 325 to 345 (FLPT…MLSV).

Belongs to the complex I subunit 2 family. As to quaternary structure, core subunit of respiratory chain NADH dehydrogenase (Complex I) which is composed of 45 different subunits. Interacts with TMEM242.

It localises to the mitochondrion inner membrane. It carries out the reaction a ubiquinone + NADH + 5 H(+)(in) = a ubiquinol + NAD(+) + 4 H(+)(out). Core subunit of the mitochondrial membrane respiratory chain NADH dehydrogenase (Complex I) which catalyzes electron transfer from NADH through the respiratory chain, using ubiquinone as an electron acceptor. Essential for the catalytic activity and assembly of complex I. In Bos indicus (Zebu), this protein is NADH-ubiquinone oxidoreductase chain 2.